The primary structure comprises 601 residues: uncharacterized protein (601 aa).

The disordered stretch occupies residues 127–364 (SSLFSSGSPP…PAFANDDTVH (238 aa)). Positions 128-137 (SLFSSGSPPD) are enriched in polar residues. The span at 141–154 (RNSTSNLSSVSTNS) shows a compositional bias: low complexity. Polar residues-rich tracts occupy residues 159–177 (TIGS…ASQR), 199–213 (ALSS…NVTP), and 232–250 (SATN…SPSQ). Serine 247 and serine 281 each carry phosphoserine. The segment covering 265–281 (SLSSSPSSEDSDLSLSS) has biased composition (low complexity). 2 stretches are compositionally biased toward basic and acidic residues: residues 286–296 (DEKKQPSKSEK) and 313–325 (GSKE…KEKA). Phosphoserine is present on serine 335. The segment covering 338–356 (DTSTEYDSNSLRRSRSNPA) has biased composition (polar residues).

This is an uncharacterized protein from Schizosaccharomyces pombe (strain 972 / ATCC 24843) (Fission yeast).